Consider the following 125-residue polypeptide: Egg cell-secreted protein 1.2 (125 aa).

An N-terminal signal peptide occupies residues 1 to 22; that stretch reads MASNTSFLFATIAILLVLNISG.

The protein belongs to the plant egg cell-secreted peptide family. Restricted to female reproductive tissues, specifically accumulating in storage vesicles of the unfertilized egg cell.

It localises to the cytoplasmic vesicle. It is found in the secreted. In terms of biological role, involved in the regulation of gamete interactions during the double fertilization and to prevent multiple-pollen tube attraction; mediates the redistribution of the gamete fusogen HAP2/GCS1 to the cell surface after secretion upon sperm arrival. The chain is Egg cell-secreted protein 1.2 (EC1.2) from Arabidopsis thaliana (Mouse-ear cress).